A 632-amino-acid chain; its full sequence is tRNA uridine 5-carboxymethylaminomethyl modification enzyme MnmG (632 aa).

Residues 15–20 (GAGHAG), I127, and S182 each bind FAD. 276–290 (GPRYCPSIEDKIVRF) is a binding site for NAD(+). Q373 provides a ligand contact to FAD.

This sequence belongs to the MnmG family. As to quaternary structure, homodimer. Heterotetramer of two MnmE and two MnmG subunits. FAD serves as cofactor.

Its subcellular location is the cytoplasm. Functionally, NAD-binding protein involved in the addition of a carboxymethylaminomethyl (cmnm) group at the wobble position (U34) of certain tRNAs, forming tRNA-cmnm(5)s(2)U34. This is tRNA uridine 5-carboxymethylaminomethyl modification enzyme MnmG from Streptococcus pyogenes serotype M28 (strain MGAS6180).